We begin with the raw amino-acid sequence, 1168 residues long: Carbamoyl phosphate synthase arginine-specific large chain, mitochondrial (1168 aa).

The N-terminal 51 residues, 1 to 51 (MLSTVHKAGRAPALLRHGRRVPVQASQLRALTSGAQNTSIFQTQANAAQRL), are a transit peptide targeting the mitochondrion. Residues 86–483 (RDHVDVKKVL…SFQKAIRQVD (398 aa)) are carboxyphosphate synthetic domain. Residues R213, 243 to 298 (ANKI…WKEV), R253, G259, G260, K290, L292, E297, G323, I324, H325, Q366, and E380 each bind ATP. Positions 217-409 (AKALEEINIP…LAYTAAKIGL (193 aa)) constitute an ATP-grasp 1 domain. Positions 366, 380, and 382 each coordinate Mg(2+). Positions 366, 380, and 382 each coordinate Mn(2+). The oligomerization domain stretch occupies residues 484–628 (PRFVGFQGDK…YTTYNASSHD (145 aa)). Positions 629 to 1017 (VTFEDKGTVI…AYWASLQSAM (389 aa)) are carbamoyl phosphate synthetic domain. One can recognise an ATP-grasp 2 domain in the interval 754–951 (SEILDSIGVD…FIDAATKALV (198 aa)). Residues 780-837 (AEEV…AQEI), R790, K829, I831, E836, G861, V862, H863, S864, Q904, and E922 each bind ATP. Q904, E922, and N924 together coordinate Mg(2+). 3 residues coordinate Mn(2+): Q904, E922, and N924. The allosteric domain stretch occupies residues 1018–1152 (NFRVPEPGEG…AEKLPRPEGI (135 aa)). Residues 1019 to 1168 (FRVPEPGEGL…WSEFIGGKPL (150 aa)) form the MGS-like domain.

Belongs to the CarB family. Heterodimer composed of 2 chains; the small (or glutamine) chain promotes the hydrolysis of glutamine to ammonia, which is used by the large (or ammonia) chain to synthesize carbamoyl phosphate. Mg(2+) serves as cofactor. Mn(2+) is required as a cofactor.

The protein resides in the mitochondrion matrix. The catalysed reaction is hydrogencarbonate + L-glutamine + 2 ATP + H2O = carbamoyl phosphate + L-glutamate + 2 ADP + phosphate + 2 H(+). The enzyme catalyses hydrogencarbonate + NH4(+) + 2 ATP = carbamoyl phosphate + 2 ADP + phosphate + 2 H(+). It participates in amino-acid biosynthesis; L-arginine biosynthesis; carbamoyl phosphate from bicarbonate: step 1/1. In terms of biological role, large subunit of the arginine-specific carbamoyl phosphate synthase (CPSase). CPSase catalyzes the formation of carbamoyl phosphate from the ammonia moiety of glutamine, hydrogencarbonate, and phosphate donated by ATP, the first step of the arginine biosynthetic pathway. The large subunit (synthetase) binds the substrates ammonia (free or transferred from glutamine from the small subunit), hydrogencarbonate and ATP and carries out an ATP-coupled ligase reaction, activating hydrogencarbonate by forming carboxy phosphate which reacts with ammonia to form carbamoyl phosphate. The protein is Carbamoyl phosphate synthase arginine-specific large chain, mitochondrial (arg-3) of Neurospora crassa (strain ATCC 24698 / 74-OR23-1A / CBS 708.71 / DSM 1257 / FGSC 987).